The chain runs to 137 residues: Large-conductance mechanosensitive channel (137 aa).

The next 3 membrane-spanning stretches (helical) occupy residues 15–35 (VDLA…NSIV), 38–58 (IIMP…MFIQ), and 80–100 (GNFV…FLVV).

Belongs to the MscL family. In terms of assembly, homopentamer.

The protein resides in the cell inner membrane. Functionally, channel that opens in response to stretch forces in the membrane lipid bilayer. May participate in the regulation of osmotic pressure changes within the cell. This is Large-conductance mechanosensitive channel from Brucella anthropi (strain ATCC 49188 / DSM 6882 / CCUG 24695 / JCM 21032 / LMG 3331 / NBRC 15819 / NCTC 12168 / Alc 37) (Ochrobactrum anthropi).